The primary structure comprises 254 residues: AA9 family lytic polysaccharide monooxygenase A (254 aa).

Positions 1 to 19 are cleaved as a signal peptide; sequence MKYSILGLTALSFVASAAA. His-20 serves as a coordination point for Cu(2+). Position 20 is a methylhistidine (His-20). Residue Val-28 participates in (1,4-beta-D-glucosyl)n binding. Asn-52 carries an N-linked (GlcNAc...) asparagine glycan. Cys-60 and Cys-186 are joined by a disulfide. Residues Val-66, Val-67, Asp-77, and Asn-86 each coordinate (1,4-beta-D-glucosyl)n. His-97 lines the Cu(2+) pocket. N-linked (GlcNAc...) asparagine glycosylation is present at Asn-129. Residues Val-148 and Arg-159 each coordinate (1,4-beta-D-glucosyl)n. Positions 166 and 181 each coordinate O2. Tyr-183 lines the Cu(2+) pocket.

The protein belongs to the polysaccharide monooxygenase AA9 family. The cofactor is Cu(2+). In terms of processing, the catalytically essential N-terminal histidine His-20 is post-translationally modified by methylation to prevent protonation of the histidine side chain, and protect the critical active site of the enzyme from oxidative damage.

It localises to the secreted. The enzyme catalyses [(1-&gt;4)-beta-D-glucosyl]n+m + reduced acceptor + O2 = 4-dehydro-beta-D-glucosyl-[(1-&gt;4)-beta-D-glucosyl]n-1 + [(1-&gt;4)-beta-D-glucosyl]m + acceptor + H2O.. The polyphenol cinnamtannin B1 contained in methanolic extract of Cinnamomum cassia (cinnamon) acts as an inhibitor of catalytic activity. Lytic polysaccharide monooxygenase (LPMO) that depolymerizes crystalline and amorphous polysaccharides via the oxidation of scissile alpha- or beta-(1-4)-glycosidic bonds, yielding C1 or C4 oxidation product. Catalysis by LPMOs requires the reduction of the active-site copper from Cu(II) to Cu(I) by a reducing agent and H(2)O(2) or O(2) as a cosubstrate. Is able to cleave phosphoric acid swollen cellulose (PASC) in the presence of a reducing agent, yielding a range of cellooligosaccharides dominated by cellobiose and cellotriose. Activity is less sensitive to the reducing agent potential when cleaving xylan, suggesting that distinct catalytic mechanisms exist for xylan and glucan cleavage. The protein is AA9 family lytic polysaccharide monooxygenase A of Panus similis (Lentinoid fungus).